The chain runs to 297 residues: Succinate dehydrogenase [ubiquinone] iron-sulfur subunit, mitochondrial (297 aa).

The 94-residue stretch at 47–140 (KKFEIYRWNP…SLKVYPLPHM (94 aa)) folds into the 2Fe-2S ferredoxin-type domain. [2Fe-2S] cluster-binding residues include Cys100, Cys105, Cys108, and Cys120. The 4Fe-4S ferredoxin-type domain maps to 185-215 (DRSKLDGLYECILCACCSTSCPSYWWNAEKY). Positions 195, 198, and 201 each coordinate [4Fe-4S] cluster. [3Fe-4S] cluster is bound at residue Cys205. A ubiquinone is bound at residue Trp210. [3Fe-4S] cluster-binding residues include Cys252 and Cys258. A [4Fe-4S] cluster-binding site is contributed by Cys262.

The protein belongs to the succinate dehydrogenase/fumarate reductase iron-sulfur protein family. Component of complex II composed of four subunits: a flavoprotein (FP), an iron-sulfur protein (IP), and a cytochrome b composed of a large and a small subunit. [2Fe-2S] cluster is required as a cofactor. The cofactor is [3Fe-4S] cluster. It depends on [4Fe-4S] cluster as a cofactor. In terms of tissue distribution, most abundant in the adult thorax and low in abdominal tissues.

The protein resides in the mitochondrion inner membrane. The catalysed reaction is a quinone + succinate = fumarate + a quinol. It functions in the pathway carbohydrate metabolism; tricarboxylic acid cycle; fumarate from succinate (eukaryal route): step 1/1. Its function is as follows. Iron-sulfur protein (IP) subunit of succinate dehydrogenase (SDH) that is involved in complex II of the mitochondrial electron transport chain and is responsible for transferring electrons from succinate to ubiquinone (coenzyme Q). The protein is Succinate dehydrogenase [ubiquinone] iron-sulfur subunit, mitochondrial (SdhB) of Drosophila melanogaster (Fruit fly).